Consider the following 224-residue polypeptide: UPF0758 protein Neut_0782 (224 aa).

Residues 102–224 (IMDSPQSVRS…TVSFAERGLI (123 aa)) form the MPN domain. Zn(2+) is bound by residues H173, H175, and D186. A JAMM motif motif is present at residues 173-186 (HNHPSGVAEPSRAD).

Belongs to the UPF0758 family.

The sequence is that of UPF0758 protein Neut_0782 from Nitrosomonas eutropha (strain DSM 101675 / C91 / Nm57).